A 211-amino-acid polypeptide reads, in one-letter code: MPHLLHVDSSLATESSTSRSIATIFAEAWREAHPDGIITYRDLSVTPPPHLDWATVSARFTPPEQLSAEQAEAVKKGEELIAEVEAADEYLLSVPMYNYAVPSTFKAWIDQIIVMGRTVRQAPDDSALTGKKVTVVTAQGGSYGPGTPKEGWDHQQPYVAHILAALGATDIEFIRVEMTLAPVNPALAEFIDLFQRSKAEAAAAARLRASV.

FMN is bound by residues Ser-10 and 16–18; that span reads STS.

Belongs to the azoreductase type 1 family. Homodimer. FMN is required as a cofactor.

The enzyme catalyses 2 a quinone + NADH + H(+) = 2 a 1,4-benzosemiquinone + NAD(+). It catalyses the reaction N,N-dimethyl-1,4-phenylenediamine + anthranilate + 2 NAD(+) = 2-(4-dimethylaminophenyl)diazenylbenzoate + 2 NADH + 2 H(+). Quinone reductase that provides resistance to thiol-specific stress caused by electrophilic quinones. In terms of biological role, also exhibits azoreductase activity. Catalyzes the reductive cleavage of the azo bond in aromatic azo compounds to the corresponding amines. The protein is FMN-dependent NADH:quinone oxidoreductase of Frankia casuarinae (strain DSM 45818 / CECT 9043 / HFP020203 / CcI3).